The primary structure comprises 544 residues: Chaperonin GroEL (544 aa).

ATP is bound by residues threonine 29–proline 32, aspartate 86–threonine 90, glycine 413, asparagine 476–leucine 478, and aspartate 492.

It belongs to the chaperonin (HSP60) family. As to quaternary structure, forms a cylinder of 14 subunits composed of two heptameric rings stacked back-to-back. Interacts with the co-chaperonin GroES.

The protein localises to the cytoplasm. The enzyme catalyses ATP + H2O + a folded polypeptide = ADP + phosphate + an unfolded polypeptide.. Functionally, together with its co-chaperonin GroES, plays an essential role in assisting protein folding. The GroEL-GroES system forms a nano-cage that allows encapsulation of the non-native substrate proteins and provides a physical environment optimized to promote and accelerate protein folding. The chain is Chaperonin GroEL from Desulfitobacterium hafniense (strain Y51).